The following is a 383-amino-acid chain: ADPPGGDISTRSPPRGLAPANVDFAFSLYRQLVSSAPDRNICISPVSVSMALAMLSLGASGHTRTQLLQGLGFNLTEMPEAEIHQGFQYLHHLLGESDTSLEMTMGNALFLDHSLELLESFSADIRRYYESEALATDFQDWPRACRQINEYIENKTQGKIADLFLGLENPAILILVNYIFFKGTWAHPFDPQSTEEKSFYVDDTTTVMVPMMFQSSTVKYLHDPVLPCRLVQLDYVGNGTAFFILPDKGKVDTVIAALSRDTIQRWSKSLTYRLVHLYIPKASISGAYELRGALAAMGIADLFTNQANFSSISQEGPLKVSKVLHKAVLQLDEHGGVEVAATGGPLQLVSEPLTLNFNRPFLILIFDDFTWSSLFLGKVVIPA.

N-linked (GlcNAc...) asparagine glycosylation is found at Asn74 and Asn154. Residue Gln232 participates in cortisol binding. N-linked (GlcNAc...) asparagine glycosylation is present at Asn238. Gln264 serves as a coordination point for cortisol. Asn308 is a glycosylation site (N-linked (GlcNAc...) asparagine). Residue Trp371 participates in cortisol binding.

This sequence belongs to the serpin family. Produced and secreted by hepatocytes, but has also been identified in a number of glycocorticoid responsive cells (it is found in maternal lung, spleen, and ovary and fetal kidney).

It localises to the secreted. Functionally, major transport protein for glucocorticoids and progestins in the blood of almost all vertebrate species. This Oryctolagus cuniculus (Rabbit) protein is Corticosteroid-binding globulin (SERPINA6).